A 166-amino-acid polypeptide reads, in one-letter code: D-aminoacyl-tRNA deacylase (166 aa).

Positions 142 to 143 match the Gly-cisPro motif, important for rejection of L-amino acids motif; sequence GP.

Belongs to the DTD family. Homodimer.

The protein resides in the cytoplasm. It catalyses the reaction glycyl-tRNA(Ala) + H2O = tRNA(Ala) + glycine + H(+). It carries out the reaction a D-aminoacyl-tRNA + H2O = a tRNA + a D-alpha-amino acid + H(+). Its function is as follows. An aminoacyl-tRNA editing enzyme that deacylates mischarged D-aminoacyl-tRNAs. Also deacylates mischarged glycyl-tRNA(Ala), protecting cells against glycine mischarging by AlaRS. Acts via tRNA-based rather than protein-based catalysis; rejects L-amino acids rather than detecting D-amino acids in the active site. By recycling D-aminoacyl-tRNA to D-amino acids and free tRNA molecules, this enzyme counteracts the toxicity associated with the formation of D-aminoacyl-tRNA entities in vivo and helps enforce protein L-homochirality. The polypeptide is D-aminoacyl-tRNA deacylase (Ralstonia nicotianae (strain ATCC BAA-1114 / GMI1000) (Ralstonia solanacearum)).